The chain runs to 163 residues: Protein-export protein SecB (163 aa).

The protein belongs to the SecB family. Homotetramer, a dimer of dimers. One homotetramer interacts with 1 SecA dimer.

It is found in the cytoplasm. In terms of biological role, one of the proteins required for the normal export of preproteins out of the cell cytoplasm. It is a molecular chaperone that binds to a subset of precursor proteins, maintaining them in a translocation-competent state. It also specifically binds to its receptor SecA. The sequence is that of Protein-export protein SecB from Brucella anthropi (strain ATCC 49188 / DSM 6882 / CCUG 24695 / JCM 21032 / LMG 3331 / NBRC 15819 / NCTC 12168 / Alc 37) (Ochrobactrum anthropi).